A 349-amino-acid polypeptide reads, in one-letter code: Holliday junction branch migration complex subunit RuvB (349 aa).

Residues M1–Y183 form a large ATPase domain (RuvB-L) region. ATP contacts are provided by residues L22, R23, G64, K67, T68, T69, E130–F132, R173, Y183, and R220. T68 lines the Mg(2+) pocket. The small ATPAse domain (RuvB-S) stretch occupies residues T184–E254. Positions S257–E349 are head domain (RuvB-H). DNA-binding residues include R293, R312, and R317.

Belongs to the RuvB family. Homohexamer. Forms an RuvA(8)-RuvB(12)-Holliday junction (HJ) complex. HJ DNA is sandwiched between 2 RuvA tetramers; dsDNA enters through RuvA and exits via RuvB. An RuvB hexamer assembles on each DNA strand where it exits the tetramer. Each RuvB hexamer is contacted by two RuvA subunits (via domain III) on 2 adjacent RuvB subunits; this complex drives branch migration. In the full resolvosome a probable DNA-RuvA(4)-RuvB(12)-RuvC(2) complex forms which resolves the HJ.

It localises to the cytoplasm. It carries out the reaction ATP + H2O = ADP + phosphate + H(+). Functionally, the RuvA-RuvB-RuvC complex processes Holliday junction (HJ) DNA during genetic recombination and DNA repair, while the RuvA-RuvB complex plays an important role in the rescue of blocked DNA replication forks via replication fork reversal (RFR). RuvA specifically binds to HJ cruciform DNA, conferring on it an open structure. The RuvB hexamer acts as an ATP-dependent pump, pulling dsDNA into and through the RuvAB complex. RuvB forms 2 homohexamers on either side of HJ DNA bound by 1 or 2 RuvA tetramers; 4 subunits per hexamer contact DNA at a time. Coordinated motions by a converter formed by DNA-disengaged RuvB subunits stimulates ATP hydrolysis and nucleotide exchange. Immobilization of the converter enables RuvB to convert the ATP-contained energy into a lever motion, pulling 2 nucleotides of DNA out of the RuvA tetramer per ATP hydrolyzed, thus driving DNA branch migration. The RuvB motors rotate together with the DNA substrate, which together with the progressing nucleotide cycle form the mechanistic basis for DNA recombination by continuous HJ branch migration. Branch migration allows RuvC to scan DNA until it finds its consensus sequence, where it cleaves and resolves cruciform DNA. The chain is Holliday junction branch migration complex subunit RuvB from Rhodopseudomonas palustris (strain ATCC BAA-98 / CGA009).